Reading from the N-terminus, the 428-residue chain is Aspartate--tRNA(Asp) ligase (428 aa).

E170 provides a ligand contact to L-aspartate. The tract at residues 192 to 195 (QLYK) is aspartate. R213 is an L-aspartate binding site. Residues 213–215 (RAE) and E351 contribute to the ATP site. Mg(2+)-binding residues include E351 and S354. 2 residues coordinate L-aspartate: S354 and R358. 399–402 (GFNR) is an ATP binding site.

Belongs to the class-II aminoacyl-tRNA synthetase family. Type 2 subfamily. In terms of assembly, homodimer. Mg(2+) is required as a cofactor.

The protein resides in the cytoplasm. It carries out the reaction tRNA(Asp) + L-aspartate + ATP = L-aspartyl-tRNA(Asp) + AMP + diphosphate. Functionally, catalyzes the attachment of L-aspartate to tRNA(Asp) in a two-step reaction: L-aspartate is first activated by ATP to form Asp-AMP and then transferred to the acceptor end of tRNA(Asp). The sequence is that of Aspartate--tRNA(Asp) ligase from Pyrobaculum aerophilum (strain ATCC 51768 / DSM 7523 / JCM 9630 / CIP 104966 / NBRC 100827 / IM2).